The primary structure comprises 197 residues: MTMELNTHNAEILLSAANKSHYPQDELPEIALAGRSNVGKSSFINTMLNRKNLARTSGKPGKTQLLNFFNIDDKMRFVDVPGYGYARVSKKEREKWGRMIEEYLTTRENLRAVVSLVDLRHDPSADDVQMYEFLKYYEIPVIIVATKADKIPRGKWNKHESAIKKKLNFDPSDDFILFSSVSKAGMDEAWDAILEKL.

Positions 26–197 (ELPEIALAGR…EAWDAILEKL (172 aa)) constitute an EngB-type G domain. GTP is bound by residues 34 to 41 (GRSNVGKS), 61 to 65 (GKTQL), 79 to 82 (DVPG), 146 to 149 (TKAD), and 178 to 180 (FSS). The Mg(2+) site is built by serine 41 and threonine 63.

It belongs to the TRAFAC class TrmE-Era-EngA-EngB-Septin-like GTPase superfamily. EngB GTPase family. Mg(2+) is required as a cofactor.

Functionally, necessary for normal cell division and for the maintenance of normal septation. The chain is Probable GTP-binding protein EngB from Streptococcus pneumoniae (strain CGSP14).